Reading from the N-terminus, the 204-residue chain is MTDSYENLLKKAYSHISEKSASSERFVVPEAKAYVEGKTTILENFAEIADTVRRDKDHLMKYMLGELGTSGKIEGNRAIFNGKFEISQIRMIIKSYVDDYVICSECGKPDTRLVKDDRVLLLRCDACGGHRPVRKRKARTEPASENLEEGQVLDVEIQSLSKRGDGVVKMGRYIMYVSNAKPGQSVKIKISRISGSIVFTERAE.

A TRAM domain is found at 146–204 (NLEEGQVLDVEIQSLSKRGDGVVKMGRYIMYVSNAKPGQSVKIKISRISGSIVFTERAE).

Belongs to the eIF-2-beta/eIF-5 family. As to quaternary structure, heterotrimer composed of an alpha, a beta and a gamma chain.

Its function is as follows. eIF-2 functions in the early steps of protein synthesis by forming a ternary complex with GTP and initiator tRNA. In Methanoregula boonei (strain DSM 21154 / JCM 14090 / 6A8), this protein is Translation initiation factor 2 subunit beta.